The sequence spans 528 residues: Glutamyl-tRNA(Gln) amidotransferase subunit B, mitochondrial (528 aa).

It belongs to the GatB/GatE family. GatB subfamily. In terms of assembly, subunit of the heterotrimeric GatFAB amidotransferase (AdT) complex, composed of A, B and F subunits.

Its subcellular location is the mitochondrion. The enzyme catalyses L-glutamyl-tRNA(Gln) + L-glutamine + ATP + H2O = L-glutaminyl-tRNA(Gln) + L-glutamate + ADP + phosphate + H(+). In terms of biological role, allows the formation of correctly charged Gln-tRNA(Gln) through the transamidation of misacylated Glu-tRNA(Gln) in the mitochondria. The reaction takes place in the presence of glutamine and ATP through an activated gamma-phospho-Glu-tRNA(Gln). This Clavispora lusitaniae (strain ATCC 42720) (Yeast) protein is Glutamyl-tRNA(Gln) amidotransferase subunit B, mitochondrial.